Reading from the N-terminus, the 337-residue chain is tRNA-dihydrouridine synthase B (337 aa).

Residues 19–21 and glutamine 73 contribute to the FMN site; that span reads PMA. Cysteine 103 functions as the Proton donor in the catalytic mechanism. FMN is bound by residues lysine 142, 203–205, and 227–228; these read NGD and GR.

Belongs to the Dus family. DusB subfamily. FMN is required as a cofactor.

It catalyses the reaction a 5,6-dihydrouridine in tRNA + NAD(+) = a uridine in tRNA + NADH + H(+). The enzyme catalyses a 5,6-dihydrouridine in tRNA + NADP(+) = a uridine in tRNA + NADPH + H(+). In terms of biological role, catalyzes the synthesis of 5,6-dihydrouridine (D), a modified base found in the D-loop of most tRNAs, via the reduction of the C5-C6 double bond in target uridines. The sequence is that of tRNA-dihydrouridine synthase B from Pseudomonas putida (strain ATCC 47054 / DSM 6125 / CFBP 8728 / NCIMB 11950 / KT2440).